We begin with the raw amino-acid sequence, 241 residues long: Chromosome partition protein MukE (241 aa).

The tract at residues 207 to 241 (DGEAATPDSLSQEKSAVKNDEEIEDELDEGLGEEE) is disordered. Positions 227–241 (EEIEDELDEGLGEEE) are enriched in acidic residues.

Belongs to the MukE family. In terms of assembly, interacts, and probably forms a ternary complex, with MukF and MukB. The complex formation is stimulated by calcium or magnesium.

It is found in the cytoplasm. Its subcellular location is the nucleoid. In terms of biological role, involved in chromosome condensation, segregation and cell cycle progression. May participate in facilitating chromosome segregation by condensation DNA from both sides of a centrally located replisome during cell division. Probably acts via its interaction with MukB and MukF. The sequence is that of Chromosome partition protein MukE from Mannheimia succiniciproducens (strain KCTC 0769BP / MBEL55E).